A 174-amino-acid polypeptide reads, in one-letter code: NADH-quinone oxidoreductase subunit B 1 (174 aa).

Cys38, Cys39, Cys104, and Cys133 together coordinate [4Fe-4S] cluster.

This sequence belongs to the complex I 20 kDa subunit family. As to quaternary structure, NDH-1 is composed of 14 different subunits. Subunits NuoB, C, D, E, F, and G constitute the peripheral sector of the complex. The cofactor is [4Fe-4S] cluster.

It is found in the cell membrane. The catalysed reaction is a quinone + NADH + 5 H(+)(in) = a quinol + NAD(+) + 4 H(+)(out). NDH-1 shuttles electrons from NADH, via FMN and iron-sulfur (Fe-S) centers, to quinones in the respiratory chain. The immediate electron acceptor for the enzyme in this species is believed to be ubiquinone. Couples the redox reaction to proton translocation (for every two electrons transferred, four hydrogen ions are translocated across the cytoplasmic membrane), and thus conserves the redox energy in a proton gradient. This chain is NADH-quinone oxidoreductase subunit B 1, found in Chloroflexus aggregans (strain MD-66 / DSM 9485).